Consider the following 264-residue polypeptide: Tritrans,polycis-undecaprenyl-diphosphate synthase (geranylgeranyl-diphosphate specific) (264 aa).

Asp-43 is an active-site residue. Position 43 (Asp-43) interacts with Mg(2+). Substrate is bound by residues 44 to 47 (GNRR), Trp-48, His-60, and 88 to 90 (STE). Catalysis depends on Asn-91, which acts as the Proton acceptor. Residues Phe-92, Arg-94, Arg-213, and 219–221 (RIS) contribute to the substrate site. Glu-232 lines the Mg(2+) pocket.

The protein belongs to the UPP synthase family. In terms of assembly, homodimer. Mg(2+) serves as cofactor.

It catalyses the reaction geranylgeranyl diphosphate + 7 isopentenyl diphosphate = tri-trans,hepta-cis-undecaprenyl diphosphate + 7 diphosphate. Catalyzes the sequential condensation of isopentenyl diphosphate (IPP) with geranylgeranyl diphosphate (GGPP) to yield (2Z,6Z,10Z,14Z,18Z,22Z,26Z,30E,34E,38E)-undecaprenyl diphosphate (tritrans,heptacis-UPP). It is probably the precursor of glycosyl carrier lipids. This chain is Tritrans,polycis-undecaprenyl-diphosphate synthase (geranylgeranyl-diphosphate specific), found in Pyrococcus abyssi (strain GE5 / Orsay).